The following is a 137-amino-acid chain: Histone H2B.4 (137 aa).

Positions Met1 to Lys37 are enriched in basic and acidic residues. Residues Met1–Lys45 form a disordered region. N6-acetyllysine occurs at positions 7 and 27. Lys133 is covalently cross-linked (Glycyl lysine isopeptide (Lys-Gly) (interchain with G-Cter in ubiquitin)).

Belongs to the histone H2B family. As to quaternary structure, the nucleosome is a histone octamer containing two molecules each of H2A, H2B, H3 and H4 assembled in one H3-H4 heterotetramer and two H2A-H2B heterodimers. The octamer wraps approximately 147 bp of DNA. In terms of processing, can be acetylated to form H2BK6ac and H2BK33ac. Monoubiquitinated to form H2BK143ub1; may give a specific tag for epigenetic transcriptional activation.

It localises to the nucleus. The protein resides in the chromosome. Its function is as follows. Core component of nucleosome. Nucleosomes wrap and compact DNA into chromatin, limiting DNA accessibility to the cellular machineries which require DNA as a template. Histones thereby play a central role in transcription regulation, DNA repair, DNA replication and chromosomal stability. DNA accessibility is regulated via a complex set of post-translational modifications of histones, also called histone code, and nucleosome remodeling. This Zea mays (Maize) protein is Histone H2B.4.